We begin with the raw amino-acid sequence, 101 residues long: Small ribosomal subunit protein uS14 (101 aa).

It belongs to the universal ribosomal protein uS14 family. In terms of assembly, part of the 30S ribosomal subunit. Contacts proteins S3 and S10.

Its function is as follows. Binds 16S rRNA, required for the assembly of 30S particles and may also be responsible for determining the conformation of the 16S rRNA at the A site. The protein is Small ribosomal subunit protein uS14 of Phenylobacterium zucineum (strain HLK1).